Reading from the N-terminus, the 160-residue chain is Ribosomal RNA large subunit methyltransferase H (160 aa).

Residues L76, G108, and 127-132 each bind S-adenosyl-L-methionine; that span reads FGFMTW.

This sequence belongs to the RNA methyltransferase RlmH family. Homodimer.

It localises to the cytoplasm. It catalyses the reaction pseudouridine(1915) in 23S rRNA + S-adenosyl-L-methionine = N(3)-methylpseudouridine(1915) in 23S rRNA + S-adenosyl-L-homocysteine + H(+). Specifically methylates the pseudouridine at position 1915 (m3Psi1915) in 23S rRNA. In Bartonella tribocorum (strain CIP 105476 / IBS 506), this protein is Ribosomal RNA large subunit methyltransferase H.